The primary structure comprises 96 residues: Large ribosomal subunit protein bL27 (96 aa).

Residues 1 to 11 (MLKTLENLQLF) constitute a propeptide that is removed on maturation. The interval 13–36 (HKKGGGSTSNGRDSQAKRLGAKAA) is disordered.

Belongs to the bacterial ribosomal protein bL27 family. In terms of processing, the N-terminus is cleaved by ribosomal processing cysteine protease Prp.

This Streptococcus thermophilus (strain CNRZ 1066) protein is Large ribosomal subunit protein bL27.